The primary structure comprises 136 residues: Histone H3.2 (136 aa).

A disordered region spans residues 1-43; the sequence is MARTKQTARKSTGGKAPRKQLATKAARKSAPATGGVKKPHRFR. An N6-methylated lysine modification is found at K5. Position 10 is an N6-acetyllysine; alternate (K10). An N6-methylated lysine; alternate modification is found at K10. Position 11 is a phosphoserine (S11). Phosphothreonine is present on T12. K15 is modified (N6-acetyllysine). An N6-acetyllysine; alternate mark is found at K19 and K24. 2 positions are modified to N6-methylated lysine; alternate: K19 and K24. Position 28 is an N6-methylated lysine (K28). At S29 the chain carries Phosphoserine. K37 carries the N6-methylated lysine modification.

The protein belongs to the histone H3 family. As to quaternary structure, the nucleosome is a histone octamer containing two molecules each of H2A, H2B, H3 and H4 assembled in one H3-H4 heterotetramer and two H2A-H2B heterodimers. The octamer wraps approximately 147 bp of DNA. Post-translationally, acetylation is generally linked to gene activation. Can be acetylated to form H3K9ac, H3K14ac, H3K18ac and H3K23ac. H3K9ac could compete with H3K9me and prevent gene silencing. H3K9ac is restricted to euchromatin. Methylated to form mainly H3K4me, H3K9me, H3K18me, H3K23me, H3K27me and H3K36me. H3K4me1/2/3, H3K9me3, H3K27me3 and H3K36me1/2/3 are typical marks for euchromatin, whereas heterochromatic chromocenters are enriched in H3K9me1/2 and H3K27me1/2. H2BK143ub1 is probably prerequisite for H3K4me. In terms of processing, can be phosphorylated to form H3S10ph, H3T11ph and H3S28ph.

The protein resides in the nucleus. Its subcellular location is the chromosome. Functionally, core component of nucleosome. Nucleosomes wrap and compact DNA into chromatin, limiting DNA accessibility to the cellular machineries which require DNA as a template. Histones thereby play a central role in transcription regulation, DNA repair, DNA replication and chromosomal stability. DNA accessibility is regulated via a complex set of post-translational modifications of histones, also called histone code, and nucleosome remodeling. This is Histone H3.2 from Encephalartos altensteinii (Altenstein's bread tree).